A 311-amino-acid polypeptide reads, in one-letter code: Pyrimidine-specific ribonucleoside hydrolase RihA (311 aa).

The active site involves His-240.

This sequence belongs to the IUNH family. RihA subfamily.

In terms of biological role, hydrolyzes cytidine or uridine to ribose and cytosine or uracil, respectively. The protein is Pyrimidine-specific ribonucleoside hydrolase RihA of Salmonella schwarzengrund (strain CVM19633).